The sequence spans 110 residues: MSLSEARYHDLVDAVQESVEDVFDDTSLDVDLENSGGVLTVRFDNGSQLILSRQPALRQLWVAARSGGFHFDYDEGSQLWLCDASGERLGELLTRVTQEQGGEALEFEDL.

It belongs to the frataxin family.

Its function is as follows. Involved in iron-sulfur (Fe-S) cluster assembly. May act as a regulator of Fe-S biogenesis. The sequence is that of Iron-sulfur cluster assembly protein CyaY from Stutzerimonas stutzeri (strain A1501) (Pseudomonas stutzeri).